Reading from the N-terminus, the 99-residue chain is DNA-binding protein HU (99 aa).

This sequence belongs to the bacterial histone-like protein family. As to quaternary structure, homodimer.

Its function is as follows. Histone-like DNA-binding protein which is capable of wrapping DNA to stabilize it, and thus to prevent its denaturation under extreme environmental conditions. This Rickettsia typhi (strain ATCC VR-144 / Wilmington) protein is DNA-binding protein HU (hup).